Here is a 375-residue protein sequence, read N- to C-terminus: Alcohol dehydrogenase 1A (375 aa).

S2 bears the N-acetylserine mark. Phosphoserine is present on S23. C47 lines the Zn(2+) pocket. 48–52 (GTDDH) contacts NAD(+). The Zn(2+) site is built by H68, C98, C101, C104, C112, and C175. Residues 200–205 (GLGGVG), D224, K229, I270, 293–295 (VGV), 318–320 (AVL), and R370 each bind NAD(+).

The protein belongs to the zinc-containing alcohol dehydrogenase family. In terms of assembly, dimer of identical or heterodimer of closely related subunits alpha, beta, or gamma that are encoded by genes ADH1A, ADH1B, and ADH1C, respectively. Zn(2+) is required as a cofactor.

The protein localises to the cytoplasm. The enzyme catalyses a primary alcohol + NAD(+) = an aldehyde + NADH + H(+). The catalysed reaction is a secondary alcohol + NAD(+) = a ketone + NADH + H(+). It carries out the reaction butan-1-ol + NAD(+) = butanal + NADH + H(+). It catalyses the reaction 1-propanol + NAD(+) = propanal + NADH + H(+). Functionally, alcohol dehydrogenase. Oxidizes primary as well as secondary alcohols. Ethanol is a very poor substrate. The sequence is that of Alcohol dehydrogenase 1A (ADH1A) from Pongo abelii (Sumatran orangutan).